We begin with the raw amino-acid sequence, 263 residues long: Ribosomal RNA small subunit methyltransferase A (263 aa).

S-adenosyl-L-methionine contacts are provided by His-13, Leu-15, Gly-40, Glu-61, Asp-86, and Asn-105.

Belongs to the class I-like SAM-binding methyltransferase superfamily. rRNA adenine N(6)-methyltransferase family. RsmA subfamily.

The protein localises to the cytoplasm. The enzyme catalyses adenosine(1518)/adenosine(1519) in 16S rRNA + 4 S-adenosyl-L-methionine = N(6)-dimethyladenosine(1518)/N(6)-dimethyladenosine(1519) in 16S rRNA + 4 S-adenosyl-L-homocysteine + 4 H(+). Functionally, specifically dimethylates two adjacent adenosines (A1518 and A1519) in the loop of a conserved hairpin near the 3'-end of 16S rRNA in the 30S particle. May play a critical role in biogenesis of 30S subunits. This is Ribosomal RNA small subunit methyltransferase A from Dichelobacter nodosus (strain VCS1703A).